A 168-amino-acid chain; its full sequence is Sensor histidine kinase component HK1 (168 aa).

The Histidine kinase; second part domain occupies 1–141; sequence MPITPLLHES…ELRITLPTPR (141 aa). Residues 137-168 are disordered; the sequence is LPTPRPPFHEELPRITSSDTKDPNREHDTSDQ. Residues 143 to 168 show a composition bias toward basic and acidic residues; it reads PFHEELPRITSSDTKDPNREHDTSDQ.

As to quaternary structure, interacts with HK2.

The enzyme catalyses ATP + protein L-histidine = ADP + protein N-phospho-L-histidine.. Its function is as follows. Member of the three-protein two-component system HK1/HK2/TcrA. Kinase that binds ATP and catalyzes the transfer of a phosphoryl group from ATP to HK2. The chain is Sensor histidine kinase component HK1 from Mycobacterium tuberculosis (strain ATCC 25618 / H37Rv).